The primary structure comprises 209 residues: Orotate phosphoribosyltransferase (209 aa).

Residues Arg96, Lys100, His102, and 122–130 (EDLISTGGS) each bind 5-phospho-alpha-D-ribose 1-diphosphate. Ser126 provides a ligand contact to orotate.

It belongs to the purine/pyrimidine phosphoribosyltransferase family. PyrE subfamily. In terms of assembly, homodimer. Mg(2+) serves as cofactor.

It carries out the reaction orotidine 5'-phosphate + diphosphate = orotate + 5-phospho-alpha-D-ribose 1-diphosphate. It participates in pyrimidine metabolism; UMP biosynthesis via de novo pathway; UMP from orotate: step 1/2. Catalyzes the transfer of a ribosyl phosphate group from 5-phosphoribose 1-diphosphate to orotate, leading to the formation of orotidine monophosphate (OMP). In Streptococcus thermophilus (strain ATCC BAA-491 / LMD-9), this protein is Orotate phosphoribosyltransferase.